The following is a 941-amino-acid chain: Isoleucine--tRNA ligase (941 aa).

The 'HIGH' region signature appears at 58–68 (PYANGDIHIGH). E563 serves as a coordination point for L-isoleucyl-5'-AMP. The short motif at 604–608 (KMSKS) is the 'KMSKS' region element. Residue K607 coordinates ATP. Residues C904, C907, C924, and C927 each coordinate Zn(2+).

Belongs to the class-I aminoacyl-tRNA synthetase family. IleS type 1 subfamily. In terms of assembly, monomer. The cofactor is Zn(2+).

It localises to the cytoplasm. The catalysed reaction is tRNA(Ile) + L-isoleucine + ATP = L-isoleucyl-tRNA(Ile) + AMP + diphosphate. Functionally, catalyzes the attachment of isoleucine to tRNA(Ile). As IleRS can inadvertently accommodate and process structurally similar amino acids such as valine, to avoid such errors it has two additional distinct tRNA(Ile)-dependent editing activities. One activity is designated as 'pretransfer' editing and involves the hydrolysis of activated Val-AMP. The other activity is designated 'posttransfer' editing and involves deacylation of mischarged Val-tRNA(Ile). This Halorhodospira halophila (strain DSM 244 / SL1) (Ectothiorhodospira halophila (strain DSM 244 / SL1)) protein is Isoleucine--tRNA ligase.